The chain runs to 72 residues: Crustacean hyperglycemic hormone (72 aa).

The residue at position 1 (glutamine 1) is a Pyrrolidone carboxylic acid. The residue at position 3 (phenylalanine 3) is a D-phenylalanine. 3 disulfide bridges follow: cysteine 7–cysteine 43, cysteine 23–cysteine 39, and cysteine 26–cysteine 52. Valine amide is present on valine 72.

In terms of tissue distribution, produced by the medulla terminalis X-organ in the eyestalks and transported to the sinus gland where they are stored and released.

The protein localises to the secreted. Its function is as follows. Hormone found in the sinus gland of isopods and decapods which controls the blood sugar level. Has a secretagogue action over the amylase released from the midgut gland. May act as a stress hormone and may be involved in the control of molting and reproduction. This is Crustacean hyperglycemic hormone from Astacus astacus (Noble crayfish).